The primary structure comprises 185 residues: Ribosome-recycling factor (185 aa).

Residues 127-158 (AVRNTRQDANNKVKKLEKDKEISEDESKKAQE) form a disordered region.

This sequence belongs to the RRF family.

The protein localises to the cytoplasm. Its function is as follows. Responsible for the release of ribosomes from messenger RNA at the termination of protein biosynthesis. May increase the efficiency of translation by recycling ribosomes from one round of translation to another. In Helicobacter pylori (strain G27), this protein is Ribosome-recycling factor.